Reading from the N-terminus, the 608-residue chain is Extracellular metalloproteinase 5 (608 aa).

The signal sequence occupies residues 1 to 20 (MHGLLLAAAGLLSLPLHVIA). Positions 21–244 (HPQPSTNLAG…VHNVVDYVSH (224 aa)) are excised as a propeptide. The N-linked (GlcNAc...) asparagine glycan is linked to Asn-285. Zn(2+) is bound at residue His-427. Glu-428 is a catalytic residue. His-431 serves as a coordination point for Zn(2+). A glycan (N-linked (GlcNAc...) asparagine) is linked at Asn-591.

The protein belongs to the peptidase M36 family. Zn(2+) is required as a cofactor.

It localises to the secreted. Its function is as follows. Secreted metalloproteinase probably acting as a virulence factor. In Trichophyton tonsurans (Scalp ringworm fungus), this protein is Extracellular metalloproteinase 5 (MEP5).